The chain runs to 377 residues: Phosphoserine aminotransferase (377 aa).

R43 provides a ligand contact to L-glutamate. Residues W105, T164, D189, and Q212 each contribute to the pyridoxal 5'-phosphate site. K213 bears the N6-(pyridoxal phosphate)lysine mark. Position 254–255 (254–255) interacts with pyridoxal 5'-phosphate; sequence NT.

Belongs to the class-V pyridoxal-phosphate-dependent aminotransferase family. SerC subfamily. As to quaternary structure, homodimer. It depends on pyridoxal 5'-phosphate as a cofactor.

Its subcellular location is the cytoplasm. It catalyses the reaction O-phospho-L-serine + 2-oxoglutarate = 3-phosphooxypyruvate + L-glutamate. The enzyme catalyses 4-(phosphooxy)-L-threonine + 2-oxoglutarate = (R)-3-hydroxy-2-oxo-4-phosphooxybutanoate + L-glutamate. It participates in amino-acid biosynthesis; L-serine biosynthesis; L-serine from 3-phospho-D-glycerate: step 2/3. The protein operates within cofactor biosynthesis; pyridoxine 5'-phosphate biosynthesis; pyridoxine 5'-phosphate from D-erythrose 4-phosphate: step 3/5. Its function is as follows. Catalyzes the reversible conversion of 3-phosphohydroxypyruvate to phosphoserine and of 3-hydroxy-2-oxo-4-phosphonooxybutanoate to phosphohydroxythreonine. This chain is Phosphoserine aminotransferase, found in Bordetella bronchiseptica (strain ATCC BAA-588 / NCTC 13252 / RB50) (Alcaligenes bronchisepticus).